The primary structure comprises 284 residues: Avenin-like b6 (284 aa).

Residues 1–18 form the signal peptide; the sequence is MKVFILALLALAATTAIA.

Belongs to the prolamin family. In terms of processing, contains disulfide bonds.

Functionally, seed storage protein. Might be integrated via inter-chain disulfide bonds within the glutenin polymer. In Triticum aestivum (Wheat), this protein is Avenin-like b6.